The primary structure comprises 430 residues: Tol-Pal system protein TolB (430 aa).

The N-terminal stretch at 1–26 is a signal peptide; that stretch reads MSLMTKLGLRTLVASCLIAVGGAANA.

Belongs to the TolB family. As to quaternary structure, the Tol-Pal system is composed of five core proteins: the inner membrane proteins TolA, TolQ and TolR, the periplasmic protein TolB and the outer membrane protein Pal. They form a network linking the inner and outer membranes and the peptidoglycan layer.

It is found in the periplasm. Functionally, part of the Tol-Pal system, which plays a role in outer membrane invagination during cell division and is important for maintaining outer membrane integrity. The chain is Tol-Pal system protein TolB from Paraburkholderia xenovorans (strain LB400).